We begin with the raw amino-acid sequence, 92 residues long: 10 kDa late embryogenesis abundant protein (92 aa).

A compositionally biased stretch (polar residues) spans 1–10 (MASQQGQQTR). A disordered region spans residues 1–92 (MASQQGQQTR…GEREEEEEED (92 aa)). 2 stretches are compositionally biased toward basic and acidic residues: residues 11–26 (KIPE…RAAK) and 38–71 (KSLE…EMGK).

The protein belongs to the small hydrophilic plant seed protein family. Maximally expressed in dry seeds. Also present in mid-maturation embryos.

Functionally, LEA proteins are late embryonic proteins abundant in higher plant seed embryos. They may play an essential role in seed survival and in controlling water exchanges during seed desiccation and imbibition. The protein is 10 kDa late embryogenesis abundant protein of Helianthus annuus (Common sunflower).